Here is a 137-residue protein sequence, read N- to C-terminus: Large ribosomal subunit protein uL16 (137 aa).

Belongs to the universal ribosomal protein uL16 family. Part of the 50S ribosomal subunit.

Binds 23S rRNA and is also seen to make contacts with the A and possibly P site tRNAs. This is Large ribosomal subunit protein uL16 from Acinetobacter baumannii (strain AB307-0294).